The primary structure comprises 237 residues: Leucyl/phenylalanyl-tRNA--protein transferase (237 aa).

This sequence belongs to the L/F-transferase family.

It is found in the cytoplasm. The catalysed reaction is N-terminal L-lysyl-[protein] + L-leucyl-tRNA(Leu) = N-terminal L-leucyl-L-lysyl-[protein] + tRNA(Leu) + H(+). It carries out the reaction N-terminal L-arginyl-[protein] + L-leucyl-tRNA(Leu) = N-terminal L-leucyl-L-arginyl-[protein] + tRNA(Leu) + H(+). The enzyme catalyses L-phenylalanyl-tRNA(Phe) + an N-terminal L-alpha-aminoacyl-[protein] = an N-terminal L-phenylalanyl-L-alpha-aminoacyl-[protein] + tRNA(Phe). Functions in the N-end rule pathway of protein degradation where it conjugates Leu, Phe and, less efficiently, Met from aminoacyl-tRNAs to the N-termini of proteins containing an N-terminal arginine or lysine. This is Leucyl/phenylalanyl-tRNA--protein transferase from Shewanella baltica (strain OS155 / ATCC BAA-1091).